Here is a 711-residue protein sequence, read N- to C-terminus: Polyribonucleotide nucleotidyltransferase (711 aa).

Residues D486 and D492 each coordinate Mg(2+). Residues 553-612 enclose the KH domain; it reads PRIHTIKINPDKIKDVIGKGGSVIRALTEETGTTIEIEDDGTVKIAATDGEKAKHAIRRI. In terms of domain architecture, S1 motif spans 622–690; that stretch reads GRVYNGKVTR…RQGRIRLSIK (69 aa). Positions 690–711 are disordered; that stretch reads KEATEQSQPAAALEAPAAEQGE. The segment covering 698 to 711 has biased composition (low complexity); it reads PAAALEAPAAEQGE.

It belongs to the polyribonucleotide nucleotidyltransferase family. Component of the RNA degradosome, which is a multiprotein complex involved in RNA processing and mRNA degradation. Requires Mg(2+) as cofactor.

The protein localises to the cytoplasm. The enzyme catalyses RNA(n+1) + phosphate = RNA(n) + a ribonucleoside 5'-diphosphate. In terms of biological role, involved in mRNA degradation. Catalyzes the phosphorolysis of single-stranded polyribonucleotides processively in the 3'- to 5'-direction. The sequence is that of Polyribonucleotide nucleotidyltransferase from Escherichia coli O127:H6 (strain E2348/69 / EPEC).